A 494-amino-acid chain; its full sequence is Argininosuccinate synthase, chloroplastic (494 aa).

The N-terminal 73 residues, 1-73, are a transit peptide targeting the chloroplast; it reads MAEISATSFP…SRSCKNQAIR (73 aa). Alanine 74 carries the post-translational modification N-acetylalanine. Residues 102–110 and alanine 129 contribute to the ATP site; that span reads AYSGGLDTS. Residues tyrosine 181 and serine 186 each coordinate L-citrulline. Glycine 211 is an ATP binding site. 3 residues coordinate L-aspartate: threonine 213, asparagine 217, and aspartate 218. Asparagine 217 serves as a coordination point for L-citrulline. L-citrulline-binding residues include arginine 221, serine 270, serine 279, glutamate 355, and tyrosine 367.

Belongs to the argininosuccinate synthase family. Type 1 subfamily. As to quaternary structure, homotetramer.

The protein localises to the plastid. It is found in the chloroplast. It catalyses the reaction L-citrulline + L-aspartate + ATP = 2-(N(omega)-L-arginino)succinate + AMP + diphosphate + H(+). It functions in the pathway amino-acid biosynthesis; L-arginine biosynthesis; L-arginine from L-ornithine and carbamoyl phosphate: step 2/3. In Arabidopsis thaliana (Mouse-ear cress), this protein is Argininosuccinate synthase, chloroplastic.